Reading from the N-terminus, the 247-residue chain is Large ribosomal subunit protein uL30 (247 aa).

Methionine 1 carries the N-acetylmethionine modification. Repeat copies occupy residues 7-17, 18-29, 30-41, and 42-53. Residues 7-53 form a 4 X 12 AA tandem repeats region; that stretch reads KKKVPAVPETLKKKRRNFAELKIKRLRKKFAQKMLRKARRKLIYEKA. Position 16 is a phosphothreonine (threonine 16). The residue at position 123 (lysine 123) is an N6-acetyllysine. Residue lysine 126 is modified to N6-succinyllysine. Tyrosine 138 carries the post-translational modification Phosphotyrosine.

It belongs to the universal ribosomal protein uL30 family. In terms of assembly, component of the large ribosomal subunit. Homodimer. Interacts with DHX33.

It localises to the cytoplasm. Its function is as follows. Component of the large ribosomal subunit. The ribosome is a large ribonucleoprotein complex responsible for the synthesis of proteins in the cell. Binds to G-rich structures in 28S rRNA and in mRNAs. Plays a regulatory role in the translation apparatus; inhibits cell-free translation of mRNAs. The protein is Large ribosomal subunit protein uL30 (RPL7) of Macaca fascicularis (Crab-eating macaque).